The chain runs to 975 residues: Protein spalten (975 aa).

2 disordered regions span residues 1-31 and 64-99; these read MKKMLFMNKKEKKEEQSPAHSSLAQQHQLAQ and NLAQLSTSTSSNSSVNNTTNTNTNTTNSSSISSNNN. Basic and acidic residues predominate over residues 8–17; it reads NKKEKKEEQS. Residues 21 to 70 are a coiled coil; that stretch reads SSLAQQHQLAQQQYQLQQQQLQLQYQQHQQQLQLAQQQKQNEQNLAQLST. The 345-residue stretch at 114 to 458 folds into the G-alpha domain; it reads FCGTIMILGH…DAEKRGFTTP (345 aa). Residues 117–130 are G1 motif; the sequence is TIMILGHTESGKTT. GTP contacts are provided by residues 122 to 129, 261 to 267, 286 to 290, and 373 to 376; these read GHTESGKT, ISAYDQK, GCSGK, and NTSD. The interval 259 to 267 is G2 motif; it reads DIISAYDQK. The tract at residues 282–291 is G3 motif; that stretch reads VDLFGCSGKQ. Residues 369-376 form a G4 motif region; that stretch reads YLIFNTSD. The segment at 427-432 is G5 motif; the sequence is VNLLDK. Disordered regions lie at residues 455-520 and 541-700; these read FTTP…GSST and DNDS…VGSK. 3 stretches are compositionally biased toward low complexity: residues 460–478, 500–515, and 544–587; these read NQSNSSPVSSIGSNSSRNS, LKNVNNNNNNNNNTTT, and SSYS…NNAT. A compositionally biased stretch (basic and acidic residues) spans 595–688; the sequence is PPKEPKPVKP…DGAAESKKNG (94 aa). The PPM-type phosphatase domain occupies 704 to 972; that stretch reads ESGFGSLQGR…DNITVLVVIL (269 aa). Residues D749, G750, D920, and D963 each coordinate Mn(2+).

This sequence in the N-terminal section; belongs to the G-alpha family. It in the C-terminal section; belongs to the PP2C family. In terms of assembly, g proteins are composed of 3 units; alpha, beta and gamma. The alpha chain contains the guanine nucleotide binding site. Mg(2+) is required as a cofactor. Mn(2+) serves as cofactor.

Its subcellular location is the cytoplasm. The protein localises to the cytosol. The protein resides in the cell membrane. The catalysed reaction is O-phospho-L-seryl-[protein] + H2O = L-seryl-[protein] + phosphate. The enzyme catalyses O-phospho-L-threonyl-[protein] + H2O = L-threonyl-[protein] + phosphate. With respect to regulation, inhibited by 50 mM NaF (sodium fluoride). In terms of biological role, involved in cell-type differentiation and morphogenesis. Dephosphorylates casein; in vitro. May also be involved as modulators or transducers in various transmembrane signaling systems. In Dictyostelium discoideum (Social amoeba), this protein is Protein spalten (spnA).